Reading from the N-terminus, the 150-residue chain is MLGAALRRCAVAATTRAGPRGLLHSARTPGPAAAIQSVRCYSHGSQETDEEFDARWVTYFNKPDIDAWELRKGINTLVTYDMVPEPKIIDAALRACRRLNDFASTVRILEAVKDKAGPHKEIYPYVIQELRPTLNELGISTPEELGLDKV.

Residues 1–41 (MLGAALRRCAVAATTRAGPRGLLHSARTPGPAAAIQSVRCY) constitute a mitochondrion transit peptide. Residues 2-17 (LGAALRRCAVAATTRA) carry the SIFI-degron motif. An N6-acetyllysine mark is found at K87 and K113. T141 carries the post-translational modification Phosphothreonine.

It belongs to the cytochrome c oxidase subunit 5A family. Component of the cytochrome c oxidase (complex IV, CIV), a multisubunit enzyme composed of 14 subunits. The complex is composed of a catalytic core of 3 subunits MT-CO1, MT-CO2 and MT-CO3, encoded in the mitochondrial DNA, and 11 supernumerary subunits COX4I, COX5A, COX5B, COX6A, COX6B, COX6C, COX7A, COX7B, COX7C, COX8 and NDUFA4, which are encoded in the nuclear genome. The complex exists as a monomer or a dimer and forms supercomplexes (SCs) in the inner mitochondrial membrane with NADH-ubiquinone oxidoreductase (complex I, CI) and ubiquinol-cytochrome c oxidoreductase (cytochrome b-c1 complex, complex III, CIII), resulting in different assemblies (supercomplex SCI(1)III(2)IV(1) and megacomplex MCI(2)III(2)IV(2)). Interacts with AFG1L. Interacts with RAB5IF. In response to mitochondrial stress, the precursor protein is ubiquitinated by the SIFI complex in the cytoplasm before mitochondrial import, leading to its degradation. Within the SIFI complex, UBR4 initiates ubiquitin chain that are further elongated or branched by KCMF1.

It is found in the mitochondrion inner membrane. It participates in energy metabolism; oxidative phosphorylation. Component of the cytochrome c oxidase, the last enzyme in the mitochondrial electron transport chain which drives oxidative phosphorylation. The respiratory chain contains 3 multisubunit complexes succinate dehydrogenase (complex II, CII), ubiquinol-cytochrome c oxidoreductase (cytochrome b-c1 complex, complex III, CIII) and cytochrome c oxidase (complex IV, CIV), that cooperate to transfer electrons derived from NADH and succinate to molecular oxygen, creating an electrochemical gradient over the inner membrane that drives transmembrane transport and the ATP synthase. Cytochrome c oxidase is the component of the respiratory chain that catalyzes the reduction of oxygen to water. Electrons originating from reduced cytochrome c in the intermembrane space (IMS) are transferred via the dinuclear copper A center (CU(A)) of subunit 2 and heme A of subunit 1 to the active site in subunit 1, a binuclear center (BNC) formed by heme A3 and copper B (CU(B)). The BNC reduces molecular oxygen to 2 water molecules using 4 electrons from cytochrome c in the IMS and 4 protons from the mitochondrial matrix. The chain is Cytochrome c oxidase subunit 5A, mitochondrial (COX5A) from Pan troglodytes (Chimpanzee).